The following is a 235-amino-acid chain: 7-cyano-7-deazaguanine synthase (235 aa).

10-20 (FSGGQDSTTCL) lines the ATP pocket. Cys-198, Cys-213, Cys-216, and Cys-219 together coordinate Zn(2+).

The protein belongs to the QueC family. Zn(2+) is required as a cofactor.

It carries out the reaction 7-carboxy-7-deazaguanine + NH4(+) + ATP = 7-cyano-7-deazaguanine + ADP + phosphate + H2O + H(+). It participates in purine metabolism; 7-cyano-7-deazaguanine biosynthesis. Functionally, catalyzes the ATP-dependent conversion of 7-carboxy-7-deazaguanine (CDG) to 7-cyano-7-deazaguanine (preQ(0)). The polypeptide is 7-cyano-7-deazaguanine synthase (Paracidovorax citrulli (strain AAC00-1) (Acidovorax citrulli)).